The chain runs to 838 residues: Extragenic suppressor of kinetochore protein 1 (838 aa).

Phosphoserine occurs at positions 411 and 418. The disordered stretch occupies residues 411 to 468 (SDEDDDDSTFSDKNSKDFKETEDMNGAEDMHGRAPQITKDNLNLTTTDSPMSEAEPVS). Phosphothreonine is present on T419. The span at 423-442 (KNSKDFKETEDMNGAEDMHG) shows a compositional bias: basic and acidic residues. Residues S425, S459, S468, and S491 each carry the phosphoserine modification. Residues 448–460 (TKDNLNLTTTDSP) show a composition bias toward polar residues. At T493 the chain carries Phosphothreonine. S494 carries the post-translational modification Phosphoserine. Over residues 690–700 (ELESNSSDDDV) the composition is skewed to acidic residues. 2 disordered regions span residues 690–745 (ELES…DQDN) and 757–838 (ISDN…NHGK). Phosphoserine is present on residues S711 and S713. Over residues 714–723 (NDEDDGNDED) the composition is skewed to acidic residues. The segment covering 724 to 734 (PLSREMSRRLS) has biased composition (basic and acidic residues). Acidic residues-rich tracts occupy residues 768-779 (SDEDDDDDDEVV) and 806-818 (SDSEEEDGNDSSD).

This sequence belongs to the SAPS family. In terms of assembly, interacts with ppe1 and mis12.

The protein resides in the nucleus. In terms of biological role, has a role in chromosome segregation. May provide a dynamic connection between kinetochore microtubules and kinetochore chromatin. The protein is Extragenic suppressor of kinetochore protein 1 (ekc1) of Schizosaccharomyces pombe (strain 972 / ATCC 24843) (Fission yeast).